The chain runs to 462 residues: Centrosomal protein of 55 kDa (462 aa).

Residues 1-11 show a composition bias toward basic and acidic residues; it reads MSSRSPKDLIK. The disordered stretch occupies residues 1–25; it reads MSSRSPKDLIKSKWGSRPSSSKSDT. Over residues 12–23 the composition is skewed to low complexity; it reads SKWGSRPSSSKS. Coiled coils occupy residues 50 to 185 and 228 to 400; these read KVAN…QQWL and YLQE…KQLH. Residues serine 96 and serine 99 each carry the phosphoserine modification. The segment at 157–235 is interaction with TSG101; the sequence is ANCFNSSMNS…EGYLQEEKQK (79 aa). The interaction with PDCD6IP stretch occupies residues 160 to 214; that stretch reads FNSSMNSIHEKEMQLKDALEKNQQWLVYDQQREAYVKGLLAKIFELEKRTETAAA. The interval 354–462 is required for localization to the interphase centrosome and to the midbody during cytokinesis; sequence QMQACTLDFE…LLVHVEYCMK (109 aa). Residues serine 423 and serine 426 each carry the phosphoserine modification. Threonine 428 carries the post-translational modification Phosphothreonine. Serine 434 carries the phosphoserine; by PLK1 modification.

Homodimer. Interacts (phosphorylated on Ser-423 and Ser-426) with PLK1; the interaction is indirect via the MTMR3:MTMR4 heterooligomer, occurs during early mitosis, regulates the phosphorylation of CEP55 by PLK1 and its recruitment to the midbody where it can mediate cell abscission. Interacts with AKAP9/CG-NAP; the interaction occurs in interphase and is lost upon mitotic entry. Interacts with PCNT/Kendrin; the interaction occurs in interphase and is lost upon mitotic entry. Directly interacts with PDCD6IP; this interaction is required for PDCD6IP targeting to the midbody; CEP55 binds PDCD6IP in a 2:1 stoichiometry; PDCD6IP competes with TSG101 for the same binding site. Interacts with TSG101; TSG101 competes with PDCD6IP for the same binding site; interaction is required for cytokinesis. Interacts with MVB12A, VPS37B, VPS37C and VPS28. There is a hierachy of phosphorylation, where both Ser-423 and Ser-426 are phosphorylated at the onset of mitosis, prior to Ser-434. Phosphorylation at Ser-423 and Ser-426 is required for dissociation from the centrosome at the G2/M boundary. Phosphorylation at the 3 sites, Ser-423, Ser-426 and Ser-434, is required for protein function at the final stages of cell division to complete cytokinesis successfully.

Its subcellular location is the cytoplasm. It localises to the cytoskeleton. It is found in the microtubule organizing center. The protein resides in the centrosome. The protein localises to the centriole. Its subcellular location is the cleavage furrow. It localises to the midbody. It is found in the midbody ring. Its function is as follows. Plays a role in mitotic exit and cytokinesis. Recruits PDCD6IP and TSG101 to midbody during cytokinesis. Required for successful completion of cytokinesis. Not required for microtubule nucleation. Plays a role in the development of the brain and kidney. The protein is Centrosomal protein of 55 kDa of Rattus norvegicus (Rat).